We begin with the raw amino-acid sequence, 80 residues long: Serine protease inhibitor Kazal-type 6 (80 aa).

The N-terminal stretch at 1–23 (MKLSGMFLLLSLALFCFLTGVFS) is a signal peptide. Pyrrolidone carboxylic acid is present on Gln24. A Kazal-like domain is found at 24 to 80 (QGGQVDCGEFQDPKVYCTRESNPHCGSDGQTYGNKCAFCKAIVKSGGKISLKHPGKC). Disulfide bonds link Cys30/Cys62, Cys40/Cys59, and Cys48/Cys80.

Its subcellular location is the secreted. Serine protease inhibitor selective for kallikreins. Efficiently inhibits KLK4, KLK5, KLK6, KLK7, KLK12, KLK13 and KLK14. Doesn't inhibit KLK8. The chain is Serine protease inhibitor Kazal-type 6 (SPINK6) from Homo sapiens (Human).